Here is a 1521-residue protein sequence, read N- to C-terminus: Retroelement silencing factor 1 (1521 aa).

A Glycyl lysine isopeptide (Lys-Gly) (interchain with G-Cter in SUMO2) cross-link involves residue K223. Residues 621–640 (EKQHKPIQGDPDIADSSLGK) form a disordered region. S910 bears the Phosphoserine mark. T996 carries the phosphothreonine modification. Polar residues-rich tracts occupy residues 1093–1105 (KNMPFSKQASQES) and 1124–1142 (LSSNTDPCRSNTSSVQSVS). 3 disordered regions span residues 1093–1147 (KNMP…EKKK), 1204–1230 (ERASVQEKTVPSPESSDPKGSSSKSTR), and 1312–1335 (EASRTHSVSNNNKGKFDGKQPDKM). S1142 is subject to Phosphoserine. The segment covering 1214 to 1228 (PSPESSDPKGSSSKS) has biased composition (low complexity). Positions 1325-1335 (GKFDGKQPDKM) are enriched in basic and acidic residues. Residue K1411 forms a Glycyl lysine isopeptide (Lys-Gly) (interchain with G-Cter in SUMO2) linkage. Disordered regions lie at residues 1425–1444 (DKQDCPGPGPEKEQAPVQVS) and 1457–1485 (IPTRTKMPESSQRDSADSRLSKRSLSADE). Residues 1467–1476 (SQRDSADSRL) show a composition bias toward basic and acidic residues. Phosphoserine occurs at positions 1482 and 1514.

In terms of assembly, interacts with SETDB1.

Its subcellular location is the nucleus. Its function is as follows. Plays a role in the regulation of imprinted gene expression, regulates repressive epigenetic modifications associated with SETDB1. Required for the recruitment or accumulation of SETDB1 to the endogenous retroviruses (ERVs) and maintenance of repressive chromatin configuration, contributing to a subset of the SETDB1-dependent ERV silencing in embryonic stem cells. The chain is Retroelement silencing factor 1 from Mus musculus (Mouse).